The primary structure comprises 155 residues: Endoribonuclease YbeY (155 aa).

Zn(2+)-binding residues include His118, His122, and His128.

This sequence belongs to the endoribonuclease YbeY family. It depends on Zn(2+) as a cofactor.

The protein resides in the cytoplasm. Single strand-specific metallo-endoribonuclease involved in late-stage 70S ribosome quality control and in maturation of the 3' terminus of the 16S rRNA. The chain is Endoribonuclease YbeY from Bordetella petrii (strain ATCC BAA-461 / DSM 12804 / CCUG 43448).